The primary structure comprises 1371 residues: DNA-directed RNA polymerase subunit beta (1371 aa).

It belongs to the RNA polymerase beta chain family. In terms of assembly, the RNAP catalytic core consists of 2 alpha, 1 beta, 1 beta' and 1 omega subunit. When a sigma factor is associated with the core the holoenzyme is formed, which can initiate transcription.

The catalysed reaction is RNA(n) + a ribonucleoside 5'-triphosphate = RNA(n+1) + diphosphate. DNA-dependent RNA polymerase catalyzes the transcription of DNA into RNA using the four ribonucleoside triphosphates as substrates. The chain is DNA-directed RNA polymerase subunit beta from Citrifermentans bemidjiense (strain ATCC BAA-1014 / DSM 16622 / JCM 12645 / Bem) (Geobacter bemidjiensis).